The primary structure comprises 750 residues: MIIRSPKPEVKIVVERDPVKTSFEKWAKPGHFSKTLAKGPDTTTWIWNLHADAHDFDSHTKDLEEISRKVFSAHFGQLAIIFIWLSGMYFHGARFSNYEAWLADPTHIKPSAQVVWPIVGQEILNGDVGGGFRGIQITSGFFQLWRASGITSELQLYCTAIGALIFAALMLFAGWFHYHKAAPELAWFQDVESMLNHHLAGLLGLGSLSWAGHQIHVSLPINQLLDAGVDPKEIPLPHEFILNRDLLAQLYPSFAKGLTPFFTLNWSEYSDFLTFRGGLNPVTGGLWLTDTAHHHLAIAVLFLIAGHMYKTNWRIGHNLKDILEAHKGPFTGEGHKGLYEILTTSWHAQLAINLAMLGSLTIIVAHHMYSMPPYPYLAIDYGTQLSLFTHHMWIGGFIIVGAAAHAAIFMVRDYDPTTQYNNLLDRVLRHRDAIVSHLNWVCIFLGFHSFGLYIHNDTMSALGRPQDMFSDTAIQLQPIFAQWIQNTHASAPGSTAPGATASTSLTWGGGDLVTVGSKVALLPIPLGTADFLVHHIHAFTIHVTVLILLKGVLFARSSRLIPDKANLGFRFPCDGPGRGGTCQVSAWDHVFLGLFWMYNAISVVIFHFSWKMQSDVWGSISDQGVVTHITGGNFAQSSITINGWLRDFLWAQASQVIQSYGSSLSAYGLLFLGAHFVWAFSLMFLFSGRGYWQELIESIVWAHNKLKVAPAIQPRALSIVQGRAVGVAHYLLGGIVTTWAFFLARIIAVG.

8 helical membrane-spanning segments follow: residues 70-93 (VFSA…FHGA), 156-179 (LYCT…FHYH), 195-219 (LNHH…HVSL), 291-309 (TAHH…GHMY), 346-369 (WHAQ…HHMY), 385-411 (LSLF…IFMV), 433-455 (AIVS…LYIH), and 531-549 (FLVH…LILL). [4Fe-4S] cluster-binding residues include Cys-573 and Cys-582. A run of 2 helical transmembrane segments spans residues 589–610 (HVFL…HFSW) and 664–686 (LSAY…MFLF). His-675 contributes to the chlorophyll a' binding site. Met-683 and Tyr-691 together coordinate chlorophyll a. Trp-692 serves as a coordination point for phylloquinone. A helical transmembrane segment spans residues 724–744 (AVGVAHYLLGGIVTTWAFFLA).

The protein belongs to the PsaA/PsaB family. As to quaternary structure, the PsaA/B heterodimer binds the P700 chlorophyll special pair and subsequent electron acceptors. PSI consists of a core antenna complex that captures photons, and an electron transfer chain that converts photonic excitation into a charge separation. The eukaryotic PSI reaction center is composed of at least 11 subunits. Requires P700 is a chlorophyll a/chlorophyll a' dimer, A0 is one or more chlorophyll a, A1 is one or both phylloquinones and FX is a shared 4Fe-4S iron-sulfur center. as cofactor.

The protein resides in the plastid. It is found in the chloroplast thylakoid membrane. The enzyme catalyses reduced [plastocyanin] + hnu + oxidized [2Fe-2S]-[ferredoxin] = oxidized [plastocyanin] + reduced [2Fe-2S]-[ferredoxin]. In terms of biological role, psaA and PsaB bind P700, the primary electron donor of photosystem I (PSI), as well as the electron acceptors A0, A1 and FX. PSI is a plastocyanin-ferredoxin oxidoreductase, converting photonic excitation into a charge separation, which transfers an electron from the donor P700 chlorophyll pair to the spectroscopically characterized acceptors A0, A1, FX, FA and FB in turn. Oxidized P700 is reduced on the lumenal side of the thylakoid membrane by plastocyanin. The sequence is that of Photosystem I P700 chlorophyll a apoprotein A1 from Pinus koraiensis (Korean pine).